Reading from the N-terminus, the 252-residue chain is Indole-3-glycerol phosphate synthase (252 aa).

Belongs to the TrpC family.

It catalyses the reaction 1-(2-carboxyphenylamino)-1-deoxy-D-ribulose 5-phosphate + H(+) = (1S,2R)-1-C-(indol-3-yl)glycerol 3-phosphate + CO2 + H2O. It functions in the pathway amino-acid biosynthesis; L-tryptophan biosynthesis; L-tryptophan from chorismate: step 4/5. The sequence is that of Indole-3-glycerol phosphate synthase from Listeria monocytogenes serotype 4b (strain CLIP80459).